The chain runs to 127 residues: Anti-adapter protein IraD (127 aa).

This sequence belongs to the GpW/Gp25 family. IraD subfamily. In terms of assembly, interacts with RssB.

The protein localises to the cytoplasm. Inhibits RpoS proteolysis by regulating RssB activity, thereby increasing the stability of the sigma stress factor RpoS during oxidative stress. Its effect on RpoS stability is due to its interaction with RssB, which probably blocks the interaction of RssB with RpoS, and the consequent delivery of the RssB-RpoS complex to the ClpXP protein degradation pathway. The polypeptide is Anti-adapter protein IraD (Escherichia coli (strain UTI89 / UPEC)).